Here is a 224-residue protein sequence, read N- to C-terminus: Myogenin (224 aa).

Ser77 and Ser79 each carry phosphoserine; by CaMK2G. One can recognise a bHLH domain in the interval 81–132; it reads DRRRAATLREKRRLKKVNEAFEALKRSTLLNPNQRLPKVEILRSAIQYIERL. Thr87 is subject to Phosphothreonine; by CaMK2G.

As to quaternary structure, homodimer and heterodimer with E12; heterodimerization enhances MYOG DNA-binding and transcriptional activities. Interacts with SMARCA4/BRG1/BAF190A. Interacts (via C-terminal region) with SSRP1 and SUPT16H; the interaction is indicative of an interaction with the FACT complex. nteracts with CSRP3. Phosphorylated by CAMK2G on threonine and serine amino acids in a muscle activity-dependent manner. Phosphorylation of Thr-87 impairs both DNA-binding and trans-activation functions in contracting muscles. Expressed in myoblast cells. Expressed weakly in myotubes (at protein level). Expressed strongly in denervated muscles and in satellite cells isolated from denervated muscles. Expressed weakly in innervated muscle and in satellite cells isolated from innervated muscles.

It is found in the nucleus. Acts as a transcriptional activator that promotes transcription of muscle-specific target genes and plays a role in muscle differentiation, cell cycle exit and muscle atrophy. Essential for the development of functional embryonic skeletal fiber muscle differentiation. However is dispensable for postnatal skeletal muscle growth; phosphorylation by CAMK2G inhibits its transcriptional activity in respons to muscle activity. Required for the recruitment of the FACT complex to muscle-specific promoter regions, thus promoting gene expression initiation. During terminal myoblast differentiation, plays a role as a strong activator of transcription at loci with an open chromatin structure previously initiated by MYOD1. Together with MYF5 and MYOD1, co-occupies muscle-specific gene promoter core regions during myogenesis. Also cooperates with myocyte-specific enhancer factor MEF2D and BRG1-dependent recruitment of SWI/SNF chromatin-remodeling enzymes to alter chromatin structure at myogenic late gene promoters. Facilitates cell cycle exit during terminal muscle differentiation through the up-regulation of miR-20a expression, which in turn represses genes involved in cell cycle progression. Binds to the E-box containing (E1) promoter region of the miR-20a gene. Also plays a role in preventing reversal of muscle cell differentiation. Contributes to the atrophy-related gene expression in adult denervated muscles. Induces fibroblasts to differentiate into myoblasts. The chain is Myogenin (Myog) from Mus musculus (Mouse).